Reading from the N-terminus, the 303-residue chain is N-acetylmuramic acid 6-phosphate etherase (303 aa).

Residues 62-225 form the SIS domain; that stretch reads IVAAFRQGGR…TTASMVLLGK (164 aa). The active-site Proton donor is Glu-90. The active site involves Glu-121.

This sequence belongs to the GCKR-like family. MurNAc-6-P etherase subfamily. Homodimer.

It catalyses the reaction N-acetyl-D-muramate 6-phosphate + H2O = N-acetyl-D-glucosamine 6-phosphate + (R)-lactate. The protein operates within amino-sugar metabolism; 1,6-anhydro-N-acetylmuramate degradation. Its pathway is amino-sugar metabolism; N-acetylmuramate degradation. It participates in cell wall biogenesis; peptidoglycan recycling. Functionally, specifically catalyzes the cleavage of the D-lactyl ether substituent of MurNAc 6-phosphate, producing GlcNAc 6-phosphate and D-lactate. Together with AnmK, is also required for the utilization of anhydro-N-acetylmuramic acid (anhMurNAc) either imported from the medium or derived from its own cell wall murein, and thus plays a role in cell wall recycling. This Histophilus somni (strain 129Pt) (Haemophilus somnus) protein is N-acetylmuramic acid 6-phosphate etherase.